The chain runs to 311 residues: Formimidoylglutamase (311 aa).

Histidine 130, aspartate 155, histidine 157, aspartate 159, cysteine 242, and aspartate 244 together coordinate Mn(2+).

Belongs to the arginase family. Mn(2+) serves as cofactor.

The enzyme catalyses N-formimidoyl-L-glutamate + H2O = formamide + L-glutamate. The protein operates within amino-acid degradation; L-histidine degradation into L-glutamate; L-glutamate from N-formimidoyl-L-glutamate (hydrolase route): step 1/1. In terms of biological role, catalyzes the conversion of N-formimidoyl-L-glutamate to L-glutamate and formamide. The protein is Formimidoylglutamase of Staphylococcus aureus (strain Mu3 / ATCC 700698).